Consider the following 283-residue polypeptide: Diaminopimelate epimerase (283 aa).

Substrate is bound by residues Asn-11 and Asn-65. Cys-74 functions as the Proton donor in the catalytic mechanism. Substrate contacts are provided by residues Gly-75–Asn-76, Asn-163, Asn-196, and Glu-214–Arg-215. Residue Cys-223 is the Proton acceptor of the active site. Gly-224–Thr-225 is a substrate binding site.

The protein belongs to the diaminopimelate epimerase family. In terms of assembly, homodimer.

The protein localises to the cytoplasm. It catalyses the reaction (2S,6S)-2,6-diaminopimelate = meso-2,6-diaminopimelate. It functions in the pathway amino-acid biosynthesis; L-lysine biosynthesis via DAP pathway; DL-2,6-diaminopimelate from LL-2,6-diaminopimelate: step 1/1. Catalyzes the stereoinversion of LL-2,6-diaminopimelate (L,L-DAP) to meso-diaminopimelate (meso-DAP), a precursor of L-lysine and an essential component of the bacterial peptidoglycan. The polypeptide is Diaminopimelate epimerase (Desulfitobacterium hafniense (strain DSM 10664 / DCB-2)).